A 282-amino-acid chain; its full sequence is MRVSTLVLSTSIIPIATALNISPFHNIEKKDILADAASAAGGAAAAVTSGAVGAANTVASGAAGAADTATSGAAGIANTVASGAAGAADTATSGAAGAAKTATSGAAGAADTATSGAVGAAKTATSGAAGAAKTATSGAAGAASGAETAAGAAASGAETAAAGQETSGAGSLVGGSGSSNSTSPSGGSGSSNGTSSGSGSGSGAGVGSGSGSGSGSRGSITGNSVATGASSGPAGLGISSSISQSTTRQLQTSGSSNSSSSAGMGNVVVGMNAVALAALVLI.

Positions 1 to 18 are cleaved as a signal peptide; that stretch reads MRVSTLVLSTSIIPIATA. A disordered region spans residues 163-264; that stretch reads GQETSGAGSL…SSNSSSSAGM (102 aa). Residues asparagine 180, asparagine 192, and asparagine 257 are each glycosylated (N-linked (GlcNAc...) asparagine). Over residues 186-216 the composition is skewed to gly residues; that stretch reads GGSGSSNGTSSGSGSGSGAGVGSGSGSGSGS. The segment covering 236–264 has biased composition (low complexity); sequence LGISSSISQSTTRQLQTSGSSNSSSSAGM. Serine 259 carries GPI-anchor amidated serine lipidation. A propeptide spans 260–282 (removed in mature form); the sequence is SSAGMGNVVVGMNAVALAALVLI.

Its subcellular location is the cell membrane. In terms of biological role, probable cell surface protein involved in the process of adhesion and early events of invasion. In Candida albicans (strain SC5314 / ATCC MYA-2876) (Yeast), this protein is Predicted GPI-anchored protein 23 (PGA23).